A 460-amino-acid polypeptide reads, in one-letter code: Arginine biosynthesis bifunctional protein ArgJ, chloroplastic (460 aa).

A chloroplast-targeting transit peptide spans 1–26; it reads MYLSVPHYPSLKFTAFQSHKRNFRVF. Substrate-binding residues include T202, K228, T239, E328, N455, and T460. T239 (nucleophile) is an active-site residue.

The protein belongs to the ArgJ family. Heterodimer of an alpha and a beta chain.

It localises to the plastid. The protein localises to the chloroplast. It catalyses the reaction N(2)-acetyl-L-ornithine + L-glutamate = N-acetyl-L-glutamate + L-ornithine. The enzyme catalyses L-glutamate + acetyl-CoA = N-acetyl-L-glutamate + CoA + H(+). Its pathway is amino-acid biosynthesis; L-arginine biosynthesis; L-ornithine and N-acetyl-L-glutamate from L-glutamate and N(2)-acetyl-L-ornithine (cyclic): step 1/1. It functions in the pathway amino-acid biosynthesis; L-arginine biosynthesis; N(2)-acetyl-L-ornithine from L-glutamate: step 1/4. Functionally, catalyzes two activities which are involved in the cyclic version of arginine biosynthesis: the synthesis of acetylglutamate from glutamate and acetyl-CoA, and of ornithine by transacetylation between acetylornithine and glutamate. The chain is Arginine biosynthesis bifunctional protein ArgJ, chloroplastic from Citrullus lanatus (Watermelon).